The chain runs to 132 residues: Small ribosomal subunit protein uS11 (132 aa).

Belongs to the universal ribosomal protein uS11 family. In terms of assembly, part of the 30S ribosomal subunit.

Functionally, located on the platform of the 30S subunit. The chain is Small ribosomal subunit protein uS11 from Sulfurisphaera tokodaii (strain DSM 16993 / JCM 10545 / NBRC 100140 / 7) (Sulfolobus tokodaii).